Reading from the N-terminus, the 295-residue chain is Probable palmitoyltransferase ZDHHC24 (295 aa).

Residues 1–20 (MTSFMSRVWCKVESTGRQLP) are Cytoplasmic-facing. The helical transmembrane segment at 21-41 (IVLNAVLVFSITAEVSYLVLV) threads the bilayer. Topologically, residues 42–60 (EAPFEPEQKKTDWSTIWTG) are extracellular. Residues 61–81 (LHLFAQYFMLGNITWNASLFV) traverse the membrane as a helical segment. The Cytoplasmic segment spans residues 82–151 (KTNPSIRGVF…HNYRYFLTCL (70 aa)). The DHHC domain occupies 102–152 (RYCYNCETHTPPRCSHCYDCNVCVLRRDHHCVFFGQCVGFHNYRYFLTCLL). Cys132 functions as the S-palmitoyl cysteine intermediate in the catalytic mechanism. A helical transmembrane segment spans residues 152-172 (LFMWAGLLYAVVMNAEVFIFI). The Extracellular segment spans residues 173-176 (LKEG). A helical membrane pass occupies residues 177–197 (VTFHSVMLLLVPWIMLVSGQV). Topologically, residues 198 to 203 (TTRAFA) are cytoplasmic. Residues 204–224 (FAFIADTCVVGFLLVAAFLFF) traverse the membrane as a helical segment. The Extracellular portion of the chain corresponds to 225–295 (HVALMLRGQT…SLEPKKQAVH (71 aa)).

This sequence belongs to the DHHC palmitoyltransferase family.

It is found in the membrane. It carries out the reaction L-cysteinyl-[protein] + hexadecanoyl-CoA = S-hexadecanoyl-L-cysteinyl-[protein] + CoA. In terms of biological role, probable palmitoyltransferase that could catalyze the addition of palmitate onto various protein substrates. This is Probable palmitoyltransferase ZDHHC24 from Danio rerio (Zebrafish).